The chain runs to 962 residues: Spliceosome associated factor 3, U4/U6 recycling protein (962 aa).

The segment covering 1–21 has biased composition (low complexity); it reads MATTAASSASEPEVEPQAGPE. The interval 1–92 is disordered; sequence MATTAASSAS…EDEWEYDEEE (92 aa). A2 carries the post-translational modification N-acetylalanine. A mediates interaction with PRPF3 region spans residues 2 to 352; the sequence is ATTAASSASE…LVPDLWIRYS (351 aa). S10 is subject to Phosphoserine. The segment covering 81 to 92 has biased composition (acidic residues); the sequence is AGEDEWEYDEEE. HAT repeat units follow at residues 127 to 159, 165 to 196, 202 to 238, 243 to 276, 325 to 357, 360 to 392, 395 to 431, 441 to 474, and 488 to 521; these read GELS…DEIS, LDRE…YSVG, GGLE…FESA, ARLE…WSEE, GDPA…YLDR, KVKD…AMER, LDHQ…YLRR, KELE…PSCL, and NNMQ…LERA. At S216 the chain carries Phosphoserine. Residues 488-521 form a required for interaction with USP4 region; that stretch reads NNMQKARELWDSIMTRGNAKYANMWLEYYNLERA. The segment at 538–952 is necessary and sufficient for U6 snRNA binding; the sequence is CTSDYPEHVC…VATEAPKMSN (415 aa). Residues 559-618 are a coiled coil; the sequence is TLEDWDLAIQKTETRLARVNEQRMKAAEKEAALVQQEEEKAEQRKKVRAEKKALKKKKKT. Basic and acidic residues predominate over residues 591-602; sequence LVQQEEEKAEQR. A disordered region spans residues 591-696; it reads LVQQEEEKAE…SLKRDMPKVA (106 aa). Residues 601 to 670 form a required for nuclear localization region; it reads QRKKVRAEKK…KEETELSGKC (70 aa). The Nuclear localization signal signature appears at 602 to 609; that stretch reads RKKVRAEK. Positions 603-618 are enriched in basic residues; the sequence is KKVRAEKKALKKKKKT. The segment covering 627–640 has biased composition (acidic residues); sequence DEDEENEWGEEEEE. Phosphoserine is present on S651. A compositionally biased stretch (basic and acidic residues) spans 680–696; that stretch reads KQKEKAASLKRDMPKVA. An RRM 1 domain is found at 704–782; it reads VTVFVSNLPY…RPMFVSPCVD (79 aa). S795 and S852 each carry phosphoserine. The RRM 2 domain maps to 801–878; the sequence is HKLFISGLPF…NVIKVAISNP (78 aa). Residues 880–962 are disordered; that stretch reads QRKVPEKPEV…ADFAKLLLRK (83 aa). R906 bears the Omega-N-methylarginine mark.

As to quaternary structure, component of the 7SK snRNP complex at least composed of P-TEFb (composed of CDK9 and CCNT1/cyclin-T1), HEXIM1, HEXIM2, BCDIN3, SART3 proteins and 7SK and U6 snRNAs. Interacts with AGO1 and AGO2. Interacts with PRPF3 and USP4; the interaction with PRPF3 is direct and recruits USP4 to its substrate PRPF3. Interacts with USP15; the interaction is direct. Ubiquitously expressed, with low level of expression in liver, heart and skeletal. Also detected in hematopoietic cells (at protein level).

It localises to the nucleus. It is found in the nucleoplasm. Its subcellular location is the cajal body. The protein resides in the nucleus speckle. The protein localises to the cytoplasm. Its function is as follows. U6 snRNP-binding protein that functions as a recycling factor of the splicing machinery. Promotes the initial reassembly of U4 and U6 snRNPs following their ejection from the spliceosome during its maturation. Also binds U6atac snRNPs and may function as a recycling factor for U4atac/U6atac spliceosomal snRNP, an initial step in the assembly of U12-type spliceosomal complex. The U12-type spliceosomal complex plays a role in the splicing of introns with non-canonical splice sites. May also function as a substrate-targeting factor for deubiquitinases like USP4 and USP15. Recruits USP4 to ubiquitinated PRPF3 within the U4/U5/U6 tri-snRNP complex, promoting PRPF3 deubiquitination and thereby regulating the spliceosome U4/U5/U6 tri-snRNP spliceosomal complex disassembly. May also recruit the deubiquitinase USP15 to histone H2B and mediate histone deubiquitination, thereby regulating gene expression and/or DNA repair. May play a role in hematopoiesis probably through transcription regulation of specific genes including MYC. The protein is Spliceosome associated factor 3, U4/U6 recycling protein of Mus musculus (Mouse).